A 335-amino-acid polypeptide reads, in one-letter code: Phospho-N-acetylmuramoyl-pentapeptide-transferase (335 aa).

10 consecutive transmembrane segments (helical) span residues 3–23 (LTILAGLIAFAVTALAMPHFI), 53–73 (GGTVFLLVATSLSFVFALVYF), 78–98 (SLGLISGILLIVLIYGIIGFL), 118–138 (FTLQIVGGLVFYVIHVMPSGI), 143–163 (VFGYHWHLGFLYLCFVLFWVV), 174–194 (GIDGLASVSVVISLLAYGVIA), 200–220 (FDVLLLIGIMVGALLAFFLFN), 226–246 (IFMGDVGSLALGAMLAAISIA), 251–271 (WTLLVIGIVYVLETSSVMLQV), and 314–334 (VDAFLWALGLVASLIVLAILY).

This sequence belongs to the glycosyltransferase 4 family. MraY subfamily. Requires Mg(2+) as cofactor.

The protein localises to the cell membrane. It catalyses the reaction UDP-N-acetyl-alpha-D-muramoyl-L-alanyl-gamma-D-glutamyl-L-lysyl-D-alanyl-D-alanine + di-trans,octa-cis-undecaprenyl phosphate = Mur2Ac(oyl-L-Ala-gamma-D-Glu-L-Lys-D-Ala-D-Ala)-di-trans,octa-cis-undecaprenyl diphosphate + UMP. It participates in cell wall biogenesis; peptidoglycan biosynthesis. In terms of biological role, catalyzes the initial step of the lipid cycle reactions in the biosynthesis of the cell wall peptidoglycan: transfers peptidoglycan precursor phospho-MurNAc-pentapeptide from UDP-MurNAc-pentapeptide onto the lipid carrier undecaprenyl phosphate, yielding undecaprenyl-pyrophosphoryl-MurNAc-pentapeptide, known as lipid I. The polypeptide is Phospho-N-acetylmuramoyl-pentapeptide-transferase (Streptococcus equi subsp. zooepidemicus (strain MGCS10565)).